A 202-amino-acid polypeptide reads, in one-letter code: Dephospho-CoA kinase (202 aa).

The DPCK domain occupies 3-202 (TIGITGGIGS…TKRPNPPDRL (200 aa)). 11–16 (GSGKSV) is a binding site for ATP. Residues 138-161 (RAMARDGSSAETMRQRMLSQEREQ) are disordered.

The protein belongs to the CoaE family.

The protein localises to the cytoplasm. It carries out the reaction 3'-dephospho-CoA + ATP = ADP + CoA + H(+). It participates in cofactor biosynthesis; coenzyme A biosynthesis; CoA from (R)-pantothenate: step 5/5. Catalyzes the phosphorylation of the 3'-hydroxyl group of dephosphocoenzyme A to form coenzyme A. The sequence is that of Dephospho-CoA kinase from Porphyromonas gingivalis (strain ATCC BAA-308 / W83).